The sequence spans 532 residues: MTKYIFVTGGVVSSIGKGITAASLGRLLKNRGLSVTIQKFDPYINVDPGTMSPYQHGEVYVTDDGAETDLDLGHYERFIDINLNKYSNVTTGKVYSEVIKKERRGDYLGGTVQVIPHITNELKDRVFRAARMTNSDIIITEIGGTVGDIESLPFLEAIRQIKSDVGAENVLYIHTTLIPYIKAAGEMKTKPTQHSVKELRSLGIQPNIIVVRTEQPVSQEMKDKIALFCDIKASEVIESRDEETLYNVPLSLQKQKMDDIVLEHLQLEAPQAEMTDWKNLVHRVKNLSKKVRIGLVGKYVSLQDAYLSVAEALRHAGYEHDAEIEIDWIDSEKVTKENVAEIMKDVDGILVPGGFGDRAIEGKIAAIEYARVNKVPYFGICLGMQLATVEFARNVLGLEGAHSAEIEPETKHNIIDLLPEQKNIENMGGTLRLGLYPARIKQGTKAEAAYGTTLVEERHRHRYEFNNEYREQMEEAGMIVSATSPDGRLVEVVELADHPWFVACQYHPEFISRPNRPQSLFKDFVGAALNNK.

The segment at 1 to 267 (MTKYIFVTGG…DDIVLEHLQL (267 aa)) is amidoligase domain. Residue S13 coordinates CTP. UTP is bound at residue S13. Position 14–19 (14–19 (SIGKGI)) interacts with ATP. Y54 contributes to the L-glutamine binding site. ATP is bound at residue D71. Mg(2+)-binding residues include D71 and E141. CTP is bound by residues 148 to 150 (DIE), 188 to 193 (KTKPTQ), and K224. UTP is bound by residues 188 to 193 (KTKPTQ) and K224. The Glutamine amidotransferase type-1 domain occupies 292 to 532 (RIGLVGKYVS…DFVGAALNNK (241 aa)). G354 contacts L-glutamine. Residue C381 is the Nucleophile; for glutamine hydrolysis of the active site. L-glutamine-binding positions include 382-385 (LGMQ), E405, and R462. Catalysis depends on residues H507 and E509.

The protein belongs to the CTP synthase family. As to quaternary structure, homotetramer.

The enzyme catalyses UTP + L-glutamine + ATP + H2O = CTP + L-glutamate + ADP + phosphate + 2 H(+). The catalysed reaction is L-glutamine + H2O = L-glutamate + NH4(+). It carries out the reaction UTP + NH4(+) + ATP = CTP + ADP + phosphate + 2 H(+). It participates in pyrimidine metabolism; CTP biosynthesis via de novo pathway; CTP from UDP: step 2/2. Its activity is regulated as follows. Allosterically activated by GTP, when glutamine is the substrate; GTP has no effect on the reaction when ammonia is the substrate. The allosteric effector GTP functions by stabilizing the protein conformation that binds the tetrahedral intermediate(s) formed during glutamine hydrolysis. Inhibited by the product CTP, via allosteric rather than competitive inhibition. In terms of biological role, catalyzes the ATP-dependent amination of UTP to CTP with either L-glutamine or ammonia as the source of nitrogen. Regulates intracellular CTP levels through interactions with the four ribonucleotide triphosphates. The polypeptide is CTP synthase (Listeria innocua serovar 6a (strain ATCC BAA-680 / CLIP 11262)).